Reading from the N-terminus, the 1812-residue chain is Protein virilizer homolog (1812 aa).

Residue alanine 2 is modified to N-acetylalanine. 2 disordered regions span residues 132–302 and 576–596; these read ISHD…EQIS and KTSS…GLER. Phosphoserine is present on residues serine 133 and serine 138. Residues 139 to 152 show a composition bias toward pro residues; the sequence is PPPPPPPPPPPQPQ. Positions 160–169 are enriched in basic and acidic residues; the sequence is KHADGEKEDQ. The residue at position 173 (serine 173) is a Phosphoserine. Positions 174–190 are enriched in pro residues; that stretch reads PPRPQPRGPRTPPGPPP. Threonine 184 is modified (phosphothreonine). Position 222 is a phosphoserine (serine 222). Residues 224 to 233 are compositionally biased toward polar residues; that stretch reads DRNSVPQEGQ. Acidic residues-rich tracts occupy residues 234–266 and 274–302; these read YSDE…EDED and IPEE…EQIS. Over residues 584–596 the composition is skewed to basic and acidic residues; sequence SEPDHDTDAGLER. A Phosphotyrosine modification is found at tyrosine 914. Serine 1579 is subject to Phosphoserine. Disordered regions lie at residues 1616 to 1635 and 1663 to 1812; these read HVVP…GIRP and KEVV…SFTR. A compositionally biased stretch (gly residues) spans 1689-1698; that stretch reads GFSGNRGGRG. Threonine 1708 is modified (phosphothreonine). Position 1723 is an omega-N-methylarginine (arginine 1723). Positions 1723–1748 are enriched in polar residues; that stretch reads RGSSWSAQNTPRGNYNESRGGQSNFN. Position 1741 is an asymmetric dimethylarginine; alternate (arginine 1741). Omega-N-methylarginine; alternate is present on arginine 1741. Residues arginine 1773, arginine 1775, and arginine 1793 each carry the asymmetric dimethylarginine modification. Over residues 1788–1802 the composition is skewed to gly residues; the sequence is GSGGSRGKFVSGGSG. Residues 1803 to 1812 show a composition bias toward basic residues; the sequence is RGRHVRSFTR.

It belongs to the vir family. As to quaternary structure, component of the WMM complex, a N6-methyltransferase complex composed of a catalytic subcomplex, named MAC, and of an associated subcomplex, named MACOM. The MAC subcomplex is composed of METTL3 and METTL14. The MACOM subcomplex is composed of WTAP, ZC3H13, CBLL1/HAKAI, VIRMA, and, in some cases of RBM15 (RBM15 or RBM15B). Interacts with WTAP. Also a component of a MACOM-like complex, named WTAP complex, composed of WTAP, ZC3H13, CBLL1, VIRMA, RBM15, BCLAF1 and THRAP3. Interacts with NUDT21 and CPSF6.

It localises to the nucleus speckle. The protein resides in the nucleus. Its subcellular location is the nucleoplasm. It is found in the cytoplasm. Associated component of the WMM complex, a complex that mediates N6-methyladenosine (m6A) methylation of RNAs, a modification that plays a role in the efficiency of mRNA splicing and RNA processing. Acts as a key regulator of m6A methylation by promoting m6A methylation of mRNAs in the 3'-UTR near the stop codon: recruits the catalytic core components METTL3 and METTL14, thereby guiding m6A methylation at specific sites. Required for mRNA polyadenylation via its role in selective m6A methylation: m6A methylation of mRNAs in the 3'-UTR near the stop codon correlating with alternative polyadenylation (APA). The sequence is that of Protein virilizer homolog from Homo sapiens (Human).